The chain runs to 156 residues: MAKTFKFIFYFWGAFVLVFALDQWVKSLTLAGLRWQSKYLDLTYALNTGVAFSMLSFLEHNLKYLHLALIGVLFIYLFWQKTLLKTHSIAFGMMLGAGVSNLLDRFIYGGVVDMFFWHKWFNFAIFNVADVMINISVALILIQEIFKKRKKDDRMD.

3 consecutive transmembrane segments (helical) span residues 5-25 (FKFI…DQWV), 64-84 (YLHL…KTLL), and 89-109 (IAFG…FIYG). Active-site residues include aspartate 113 and aspartate 130. A helical transmembrane segment spans residues 122-142 (NFAIFNVADVMINISVALILI).

The protein belongs to the peptidase A8 family.

It localises to the cell inner membrane. It carries out the reaction Release of signal peptides from bacterial membrane prolipoproteins. Hydrolyzes -Xaa-Yaa-Zaa-|-(S,diacylglyceryl)Cys-, in which Xaa is hydrophobic (preferably Leu), and Yaa (Ala or Ser) and Zaa (Gly or Ala) have small, neutral side chains.. It participates in protein modification; lipoprotein biosynthesis (signal peptide cleavage). This protein specifically catalyzes the removal of signal peptides from prolipoproteins. This chain is Lipoprotein signal peptidase, found in Campylobacter jejuni subsp. doylei (strain ATCC BAA-1458 / RM4099 / 269.97).